We begin with the raw amino-acid sequence, 238 residues long: Ribosomal RNA small subunit methyltransferase G (238 aa).

S-adenosyl-L-methionine-binding positions include Gly-77, Phe-82, 128 to 129 (AE), and Arg-147.

It belongs to the methyltransferase superfamily. RNA methyltransferase RsmG family.

The protein localises to the cytoplasm. Specifically methylates the N7 position of guanine in position 535 of 16S rRNA. In Listeria innocua serovar 6a (strain ATCC BAA-680 / CLIP 11262), this protein is Ribosomal RNA small subunit methyltransferase G.